We begin with the raw amino-acid sequence, 342 residues long: Phosphate acyltransferase (342 aa).

Belongs to the PlsX family. In terms of assembly, homodimer. Probably interacts with PlsY.

The protein resides in the cytoplasm. It catalyses the reaction a fatty acyl-[ACP] + phosphate = an acyl phosphate + holo-[ACP]. The protein operates within lipid metabolism; phospholipid metabolism. Its function is as follows. Catalyzes the reversible formation of acyl-phosphate (acyl-PO(4)) from acyl-[acyl-carrier-protein] (acyl-ACP). This enzyme utilizes acyl-ACP as fatty acyl donor, but not acyl-CoA. In Shewanella halifaxensis (strain HAW-EB4), this protein is Phosphate acyltransferase.